A 64-amino-acid polypeptide reads, in one-letter code: GDEKRPWECCDIAMCTRSIPPICRCVDKVDRCSDACKDCEETEDNRHVCFDTYIGDPGPTCHDD.

Cystine bridges form between Cys-9/Cys-61, Cys-10/Cys-25, Cys-15/Cys-23, Cys-32/Cys-39, and Cys-36/Cys-49.

The protein belongs to the Bowman-Birk serine protease inhibitor family.

The chain is Bowman-Birk type trypsin inhibitor TI1 from Coix lacryma-jobi (Job's tears).